The sequence spans 606 residues: Aspartate--tRNA(Asp/Asn) ligase (606 aa).

Residue glutamate 177 participates in L-aspartate binding. The tract at residues 201–204 (QIFK) is aspartate. Residue arginine 223 coordinates L-aspartate. ATP-binding positions include 223–225 (RDE) and glutamine 232. Histidine 461 is a binding site for L-aspartate. Glutamate 499 is a binding site for ATP. An L-aspartate-binding site is contributed by arginine 506. 551–554 (GLDR) contributes to the ATP binding site.

Belongs to the class-II aminoacyl-tRNA synthetase family. Type 1 subfamily. In terms of assembly, homodimer.

It localises to the cytoplasm. It carries out the reaction tRNA(Asx) + L-aspartate + ATP = L-aspartyl-tRNA(Asx) + AMP + diphosphate. Functionally, aspartyl-tRNA synthetase with relaxed tRNA specificity since it is able to aspartylate not only its cognate tRNA(Asp) but also tRNA(Asn). Reaction proceeds in two steps: L-aspartate is first activated by ATP to form Asp-AMP and then transferred to the acceptor end of tRNA(Asp/Asn). The polypeptide is Aspartate--tRNA(Asp/Asn) ligase (Prochlorococcus marinus (strain MIT 9211)).